The following is a 591-amino-acid chain: Aspartate--tRNA ligase (591 aa).

Position 172 (Glu-172) interacts with L-aspartate. Residues 196–199 (QLFK) form an aspartate region. An L-aspartate-binding site is contributed by Arg-218. Residues 218–220 (RDE) and Gln-227 each bind ATP. L-aspartate is bound at residue His-449. Residue Glu-483 participates in ATP binding. Arg-490 serves as a coordination point for L-aspartate. 535–538 (GLDR) contacts ATP.

The protein belongs to the class-II aminoacyl-tRNA synthetase family. Type 1 subfamily. In terms of assembly, homodimer.

It is found in the cytoplasm. It catalyses the reaction tRNA(Asp) + L-aspartate + ATP = L-aspartyl-tRNA(Asp) + AMP + diphosphate. Catalyzes the attachment of L-aspartate to tRNA(Asp) in a two-step reaction: L-aspartate is first activated by ATP to form Asp-AMP and then transferred to the acceptor end of tRNA(Asp). The chain is Aspartate--tRNA ligase from Actinobacillus pleuropneumoniae serotype 7 (strain AP76).